The chain runs to 165 residues: Protein SprT (165 aa).

The SprT-like domain occupies 22-163 (LAQANLKLGC…RCVHCGEQLV (142 aa)). His-78 is a Zn(2+) binding site. Glu-79 is an active-site residue. A Zn(2+)-binding site is contributed by His-82.

It belongs to the SprT family. It depends on Zn(2+) as a cofactor.

Its subcellular location is the cytoplasm. The polypeptide is Protein SprT (Shigella dysenteriae serotype 1 (strain Sd197)).